The chain runs to 777 residues: Acyl-homoserine lactone acylase PvdQ (777 aa).

A signal peptide spans 1–25 (MIISRQLPSFCLAALFLSFSGGAHA). Residues 196 to 218 (AGLPAEHWQLAAARQQRFALDRG) constitute a propeptide, spacer peptide. Serine 219 (nucleophile) is an active-site residue.

Belongs to the peptidase S45 family. Heterodimer of an alpha subunit and a beta subunit processed from the same precursor.

The protein localises to the periplasm. The catalysed reaction is an N-acyl-L-homoserine lactone + H2O = L-homoserine lactone + a carboxylate. Catalyzes the deacylation of acyl-homoserine lactone (AHL or acyl-HSL), releasing homoserine lactone (HSL) and the corresponding fatty acid. Possesses a specificity for the degradation of long-chain acyl-HSLs (side chains of 11 to 14 carbons in length). This chain is Acyl-homoserine lactone acylase PvdQ (pvdQ), found in Pseudomonas fluorescens (strain ATCC BAA-477 / NRRL B-23932 / Pf-5).